The chain runs to 375 residues: N-acetylneuraminate epimerase (375 aa).

The signal sequence occupies residues 1-22 (MKLTKTALCTALFATFTFSANA). Kelch repeat units lie at residues 43-87 (TVYV…AAVD), 89-140 (KLYV…ASHG), 142-176 (KVYI…EIAA), 177-222 (AYFD…TIQG), 225-273 (LVVV…LAGA), 295-344 (KQYK…SYNN), and 346-375 (VLLI…LTIE). Glutamate 231 (proton acceptor) is an active-site residue.

This sequence belongs to the NanM family. Homodimer.

Its subcellular location is the periplasm. The catalysed reaction is N-acetyl-alpha-neuraminate = N-acetyl-beta-neuraminate. In terms of biological role, converts alpha-N-acetylneuranimic acid (Neu5Ac) to the beta-anomer, accelerating the equilibrium between the alpha- and beta-anomers. Probably facilitates sialidase-negative bacteria to compete successfully for limited amounts of extracellular Neu5Ac, which is likely taken up in the beta-anomer. In addition, the rapid removal of sialic acid from solution might be advantageous to the bacterium to damp down host responses. The polypeptide is N-acetylneuraminate epimerase (Haemophilus influenzae (strain PittEE)).